A 394-amino-acid chain; its full sequence is NAD(P)H-quinone oxidoreductase subunit H (394 aa).

It belongs to the complex I 49 kDa subunit family. As to quaternary structure, NDH-1 can be composed of about 15 different subunits; different subcomplexes with different compositions have been identified which probably have different functions.

Its subcellular location is the cellular thylakoid membrane. It carries out the reaction a plastoquinone + NADH + (n+1) H(+)(in) = a plastoquinol + NAD(+) + n H(+)(out). The enzyme catalyses a plastoquinone + NADPH + (n+1) H(+)(in) = a plastoquinol + NADP(+) + n H(+)(out). In terms of biological role, NDH-1 shuttles electrons from an unknown electron donor, via FMN and iron-sulfur (Fe-S) centers, to quinones in the respiratory and/or the photosynthetic chain. The immediate electron acceptor for the enzyme in this species is believed to be plastoquinone. Couples the redox reaction to proton translocation, and thus conserves the redox energy in a proton gradient. Cyanobacterial NDH-1 also plays a role in inorganic carbon-concentration. The chain is NAD(P)H-quinone oxidoreductase subunit H from Trichormus variabilis (strain ATCC 29413 / PCC 7937) (Anabaena variabilis).